The following is a 669-amino-acid chain: Histone-lysine N-methyltransferase, H3 lysine-9 specific SUVH3 (669 aa).

Disordered regions lie at residues 56-127 (YSSF…EKKT) and 270-290 (ESLI…ASDQ). 2 stretches are compositionally biased toward polar residues: residues 65-82 (QQPT…NTPI) and 93-107 (RTPT…SSGT). The segment at residues 108 to 120 (KRGVGRPKGTTSV) is a DNA-binding region (a.T hook). Residues 208–355 (GTVPGIEVGD…CNTFKYKLVR (148 aa)) form the YDG domain. Positions 430-491 (IGCSCSGSCS…SCKNRVIQTG (62 aa)) constitute a Pre-SET domain. Positions 432, 434, 438, 445, 447, 473, 477, 479, and 483 each coordinate Zn(2+). The SET domain occupies 494 to 638 (SRLEVFKTRN…PMAELTYDYG (145 aa)). S-adenosyl-L-methionine-binding positions include 504-506 (RGW), D540, Y542, R592, and 595-596 (NH). Zn(2+) contacts are provided by C598, C657, C659, and C664. The Post-SET domain occupies 653–669 (GQRTCLCGSEQCRGSFG).

This sequence belongs to the class V-like SAM-binding methyltransferase superfamily. Histone-lysine methyltransferase family. Suvar3-9 subfamily. As to expression, expressed in leaves stems and flowers.

It localises to the nucleus. Its subcellular location is the chromosome. The protein localises to the centromere. It carries out the reaction L-lysyl(9)-[histone H3] + S-adenosyl-L-methionine = N(6)-methyl-L-lysyl(9)-[histone H3] + S-adenosyl-L-homocysteine + H(+). Histone methyltransferase. Methylates 'Lys-9' of histone H3. H3 'Lys-9' methylation represents a specific tag for epigenetic transcriptional repression. The polypeptide is Histone-lysine N-methyltransferase, H3 lysine-9 specific SUVH3 (SUVH3) (Arabidopsis thaliana (Mouse-ear cress)).